Consider the following 192-residue polypeptide: Phosphoheptose isomerase (192 aa).

In terms of domain architecture, SIS spans 35-192 (LIETLENQGK…CIERHFAHKN (158 aa)). 50-52 (NGG) contributes to the substrate binding site. Zn(2+)-binding residues include histidine 59 and glutamate 63. Residues glutamate 63, 92 to 93 (ND), 118 to 120 (STS), serine 123, and glutamine 170 contribute to the substrate site. Glutamine 170 and histidine 178 together coordinate Zn(2+).

This sequence belongs to the SIS family. GmhA subfamily. In terms of assembly, homotetramer. Requires Zn(2+) as cofactor.

It is found in the cytoplasm. It carries out the reaction 2 D-sedoheptulose 7-phosphate = D-glycero-alpha-D-manno-heptose 7-phosphate + D-glycero-beta-D-manno-heptose 7-phosphate. It functions in the pathway carbohydrate biosynthesis; D-glycero-D-manno-heptose 7-phosphate biosynthesis; D-glycero-alpha-D-manno-heptose 7-phosphate and D-glycero-beta-D-manno-heptose 7-phosphate from sedoheptulose 7-phosphate: step 1/1. In terms of biological role, catalyzes the isomerization of sedoheptulose 7-phosphate in D-glycero-D-manno-heptose 7-phosphate. The chain is Phosphoheptose isomerase from Helicobacter pylori (strain P12).